The sequence spans 164 residues: Galectin-3 (164 aa).

Residues 9-154 (STVDLSEPLK…FSDVLGVTVL (146 aa)) form the Galectin domain. The a carbohydrate site is built by histidine 60, arginine 64, asparagine 73, and glutamate 84.

In terms of assembly, homotetramer. Oligomerization is required for carbohydrate binding.

It localises to the secreted. It is found in the extracellular space. Its subcellular location is the extracellular matrix. The protein resides in the cell wall. Binds lactose. May play a role in fruiting body formation. This is Galectin-3 (Cgl3) from Coprinopsis cinerea (strain Okayama-7 / 130 / ATCC MYA-4618 / FGSC 9003) (Inky cap fungus).